We begin with the raw amino-acid sequence, 2590 residues long: 5-methylorsellinic acid synthase (2590 aa).

Positions 6-255 (LLCGSQAIQW…HNQVNRELFA (250 aa)) are N-terminal acylcarrier protein transacylase domain (SAT). The 416-residue stretch at 369–784 (GDSIAIVGMG…GSNAALIVTQ (416 aa)) folds into the Ketosynthase family 3 (KS3) domain. Residues Cys-534, His-669, and His-707 each act as for beta-ketoacyl synthase activity in the active site. The tract at residues 891–1191 (LAFGGQTGNV…HAVNLGGPEP (301 aa)) is malonyl-CoA:ACP transacylase (MAT) domain. Ser-978 serves as the catalytic For acyl/malonyl transferase activity. An N-terminal hotdog fold region spans residues 1263–1393 (PKLVSFVKYL…GTVNISSLTS (131 aa)). The PKS/mFAS DH domain maps to 1263–1569 (PKLVSFVKYL…FAKVPTASLK (307 aa)). Positions 1267–1568 (SFVKYLDSNR…RFAKVPTASL (302 aa)) are product template (PT) domain. The active-site Proton acceptor; for dehydratase activity is His-1297. Residues 1421-1569 (TSAIQGSLVY…FAKVPTASLK (149 aa)) form a C-terminal hotdog fold region. Asp-1481 functions as the Proton donor; for dehydratase activity in the catalytic mechanism. The tract at residues 1587–1612 (LKVTEPSANVPKAQPVSTYPKPMKPA) is disordered. 2 consecutive Carrier domains span residues 1617-1691 (AQIR…ASGT) and 1736-1812 (SAQA…IPKP). 2 positions are modified to O-(pantetheine 4'-phosphoryl)serine: Ser-1651 and Ser-1772. The segment at 1980-2212 (QHRGEHKLLN…GFRHVDWSDD (233 aa)) is methyltransferase (CMeT) domain. The tract at residues 2282 to 2590 (LMIHGGGHIM…EGYEFLLRHL (309 aa)) is thioesterase (TE) domain.

It catalyses the reaction 3 malonyl-CoA + acetyl-CoA + S-adenosyl-L-methionine + H(+) = 5-methylorsellinate + S-adenosyl-L-homocysteine + 3 CO2 + 4 CoA. It functions in the pathway secondary metabolite biosynthesis. Non-reducing polyketide synthase; part of the cluster A that mediates the biosynthesis of azasperpyranones, members of the azaphilone family that exhibit anti-cancer activities. Azasperpyranones are synthesized by 2 clusters, A and B. Cluster A is responsible for the production of the polyhydric phenol moiety while the azaphilonoid scaffold is produced by the cluster B. The non-reducing polyketide synthase ATEG_03629 produces 5-methyl orsellinic acid, which is then reduced to 5-methyl orsellinic aldehyde by the NRPS-like protein ATEG_03630. 5-methyl orsellinic aldehyde is then first hydroxylated by the FAD-dependent monooxygenase ATEG_03635 and subsequently hydroxylated by the cytochrome P450 monooxygenase ATEG_03631 to produce the unstable polyhydric phenol precursor of azasperpyranones. On the other hand, the polyketide synthase ATEG_07659 is responsible for producing the 3,5-dimethyloctadienone moiety from acetyl-CoA, three malonyl-CoA, and two S-adenosyl methionines (SAM). The 3,5-dimethyloctadienone moiety is then loaded onto the SAT domain of ATEG_07661 and extended with four malonyl-CoA and one SAM, which leads to the formation of 2,4-dihydroxy-6-(5,7-dimethyl-2-oxo-trans-3-trans-5-nonadienyl)-3-methylbenzaldehyde (compound 8) after reductive release and aldol condensation. The FAD-dependent monooxygenase ATEG_07662 is the next enzyme in the biosynthesis sequence and hydroxylates the side chain at the benzylic position of compound 8. In Aspergillus nidulans, afoF, the ortholog of the FAD-dependent oxygenase ATEG_07660, is the key enzyme for the biosynthesis of asperfuranone by catalyzing the hydroxylation at C-8 of to prevent the formation of a six-membered ring hemiacetal intermediate and thus facilitating the formation of a five-membered ring to produce asperfuranone. In Aspergillus terreus, ATEG_07660 is probably not functional, which leads to the formation of the six-membered ring hemiacetal intermediate presperpyranone instead of asperfuranone. Finally, ATEG_03636 is involved in the condensation of the polyhydric phenol moiety produced by cluster A and the perasperpyranone precursor produced by cluster B, to yield azasperpyranone A. Further modifications of azasperpyranone A result in the production of derivatives, including azasperpyranone B to F. This Aspergillus terreus (strain NIH 2624 / FGSC A1156) protein is 5-methylorsellinic acid synthase.